Here is a 29-residue protein sequence, read N- to C-terminus: Cytochrome b6-f complex subunit 8 (29 aa).

Residues 3 to 23 (TVSIAWAALMVIFTFSISLVV) form a helical membrane-spanning segment.

This sequence belongs to the PetN family. In terms of assembly, the 4 large subunits of the cytochrome b6-f complex are cytochrome b6, subunit IV (17 kDa polypeptide, PetD), cytochrome f and the Rieske protein, while the 4 small subunits are PetG, PetL, PetM and PetN. The complex functions as a dimer.

Its subcellular location is the plastid. It localises to the chloroplast thylakoid membrane. Its function is as follows. Component of the cytochrome b6-f complex, which mediates electron transfer between photosystem II (PSII) and photosystem I (PSI), cyclic electron flow around PSI, and state transitions. The sequence is that of Cytochrome b6-f complex subunit 8 from Psilotum nudum (Whisk fern).